We begin with the raw amino-acid sequence, 156 residues long: Cell division protein SepF (156 aa).

Belongs to the SepF family. Homodimer. Interacts with FtsZ.

The protein resides in the cytoplasm. Functionally, cell division protein that is part of the divisome complex and is recruited early to the Z-ring. Probably stimulates Z-ring formation, perhaps through the cross-linking of FtsZ protofilaments. Its function overlaps with FtsA. The sequence is that of Cell division protein SepF from Ruminiclostridium cellulolyticum (strain ATCC 35319 / DSM 5812 / JCM 6584 / H10) (Clostridium cellulolyticum).